The primary structure comprises 602 residues: Aspartate--tRNA(Asp/Asn) ligase (602 aa).

Glu-175 provides a ligand contact to L-aspartate. Positions 199–202 (QIFK) are aspartate. Arg-221 is an L-aspartate binding site. Residues 221–223 (RDE) and Gln-230 contribute to the ATP site. An L-aspartate-binding site is contributed by His-458. Glu-492 contributes to the ATP binding site. L-aspartate is bound at residue Arg-499. Residue 544 to 547 (GLDR) participates in ATP binding.

It belongs to the class-II aminoacyl-tRNA synthetase family. Type 1 subfamily. In terms of assembly, homodimer.

The protein localises to the cytoplasm. It carries out the reaction tRNA(Asx) + L-aspartate + ATP = L-aspartyl-tRNA(Asx) + AMP + diphosphate. In terms of biological role, aspartyl-tRNA synthetase with relaxed tRNA specificity since it is able to aspartylate not only its cognate tRNA(Asp) but also tRNA(Asn). Reaction proceeds in two steps: L-aspartate is first activated by ATP to form Asp-AMP and then transferred to the acceptor end of tRNA(Asp/Asn). The polypeptide is Aspartate--tRNA(Asp/Asn) ligase (Cupriavidus metallidurans (strain ATCC 43123 / DSM 2839 / NBRC 102507 / CH34) (Ralstonia metallidurans)).